Here is a 654-residue protein sequence, read N- to C-terminus: Heat shock 70 kDa protein 2 (654 aa).

Positions 612–646 (AGGEGGAPGAGFPGAGGPGGFPGAGAGGAHSGGDD) are enriched in gly residues. The tract at residues 612 to 654 (AGGEGGAPGAGFPGAGGPGGFPGAGAGGAHSGGDDGPTVEEVD) is disordered.

The protein belongs to the heat shock protein 70 family.

The protein is Heat shock 70 kDa protein 2 (HSP70-2) of Paracoccidioides lutzii (strain ATCC MYA-826 / Pb01) (Paracoccidioides brasiliensis).